Reading from the N-terminus, the 67-residue chain is DNA-directed RNA polymerase subunit omega (67 aa).

Belongs to the RNA polymerase subunit omega family. In terms of assembly, the RNAP catalytic core consists of 2 alpha, 1 beta, 1 beta' and 1 omega subunit. When a sigma factor is associated with the core the holoenzyme is formed, which can initiate transcription.

It carries out the reaction RNA(n) + a ribonucleoside 5'-triphosphate = RNA(n+1) + diphosphate. In terms of biological role, promotes RNA polymerase assembly. Latches the N- and C-terminal regions of the beta' subunit thereby facilitating its interaction with the beta and alpha subunits. The chain is DNA-directed RNA polymerase subunit omega from Bordetella petrii (strain ATCC BAA-461 / DSM 12804 / CCUG 43448).